The following is a 420-amino-acid chain: LanC-like protein 3 (420 aa).

The protein belongs to the LanC-like protein family.

This is LanC-like protein 3 (LANCL3) from Homo sapiens (Human).